Consider the following 85-residue polypeptide: Homeobox protein knotted-1-like 8 (85 aa).

Positions 1-21 (ELKHQLLRKYGGYLGGLRQEF) constitute an ELK domain. The homeobox; TALE-type DNA-binding region spans 22–85 (SKRKKKGKLP…NQRKRHWKPA (64 aa)).

This sequence belongs to the TALE/KNOX homeobox family. As to expression, strongly expressed in ear inflorescence primordia and shoot meristem. Weakly expressed in embryos. Absent from leaves.

The protein resides in the nucleus. Its function is as follows. Probably binds to the DNA sequence 5'-TGAC-3'. This is Homeobox protein knotted-1-like 8 (KNOX8) from Zea mays (Maize).